The following is a 257-amino-acid chain: Phycoerythrobilin:ferredoxin oxidoreductase (257 aa).

It belongs to the HY2 family.

It catalyses the reaction (3Z)-phycoerythrobilin + oxidized 2[4Fe-4S]-[ferredoxin] = 15,16-dihydrobiliverdin + reduced 2[4Fe-4S]-[ferredoxin] + 2 H(+). Catalyzes the two-electron reduction of the C2 and C3(1) diene system of 15,16-dihydrobiliverdin. The polypeptide is Phycoerythrobilin:ferredoxin oxidoreductase (Prochlorococcus marinus (strain MIT 9211)).